The sequence spans 67 residues: Small ribosomal subunit protein eS17 (67 aa).

This sequence belongs to the eukaryotic ribosomal protein eS17 family.

The protein is Small ribosomal subunit protein eS17 of Pyrococcus abyssi (strain GE5 / Orsay).